The primary structure comprises 683 residues: DNA polymerase alpha-associated DNA helicase A (683 aa).

An ATP-binding site is contributed by 229–236; the sequence is GPPGTGKT.

This sequence belongs to the DNA2/NAM7 helicase family. As to quaternary structure, associates with the hexameric DNA polymerase alpha.

The protein localises to the cytoplasm. The protein resides in the nucleus. It carries out the reaction ATP + H2O = ADP + phosphate + H(+). DNA polymerase alpha-associated DNA helicase which may be involved in DNA replication. The protein is DNA polymerase alpha-associated DNA helicase A (HCS1) of Saccharomyces cerevisiae (strain ATCC 204508 / S288c) (Baker's yeast).